Consider the following 341-residue polypeptide: MSDTVVSLASSQAPDAVRQDIRHDWTLAEIQAIHDMPLLDLVHRAGTVHRAHNDPADIQRAALLSIKTGGCPEDCAYCPQSAHHKGANLPRERLMPVDAVLKEAAAAKANGAHRFCMGAAWRKPKDGPEFDAVLEMVRGVRGLGMEACVTLGMLTQSQAQRLAEAGLTSYNHNLDTGPEFYGDIISTRTYDDRLQTLEHVRQAGIGVCCGGIVGMGERVRDRAEMLLVLANHAPHPESVPINALVAVEGTPLEDRPPIDPLDLVRMCATARIVMPKARVRLSAGRKSLTREAQILCFLAGANSIFYGERLLTTANNEADADAELLRDIGVPVPEVTLAAAE.

Residues 56-285 form the Radical SAM core domain; it reads ADIQRAALLS…KARVRLSAGR (230 aa). The [4Fe-4S] cluster site is built by Cys-71, Cys-75, and Cys-78. [2Fe-2S] cluster is bound by residues Cys-116, Cys-148, Cys-208, and Arg-280.

It belongs to the radical SAM superfamily. Biotin synthase family. In terms of assembly, homodimer. [4Fe-4S] cluster serves as cofactor. It depends on [2Fe-2S] cluster as a cofactor.

It catalyses the reaction (4R,5S)-dethiobiotin + (sulfur carrier)-SH + 2 reduced [2Fe-2S]-[ferredoxin] + 2 S-adenosyl-L-methionine = (sulfur carrier)-H + biotin + 2 5'-deoxyadenosine + 2 L-methionine + 2 oxidized [2Fe-2S]-[ferredoxin]. It participates in cofactor biosynthesis; biotin biosynthesis; biotin from 7,8-diaminononanoate: step 2/2. In terms of biological role, catalyzes the conversion of dethiobiotin (DTB) to biotin by the insertion of a sulfur atom into dethiobiotin via a radical-based mechanism. This is Biotin synthase from Methylorubrum populi (strain ATCC BAA-705 / NCIMB 13946 / BJ001) (Methylobacterium populi).